Here is a 218-residue protein sequence, read N- to C-terminus: Octanoyltransferase (218 aa).

The BPL/LPL catalytic domain occupies 32–211; it reads INTYDEIWFL…KLSQLLNVSI (180 aa). Residues 75 to 82, 142 to 144, and 155 to 157 contribute to the substrate site; these read RGGQITYH, SLG, and GLS. Residue Cys-173 is the Acyl-thioester intermediate of the active site.

Belongs to the LipB family.

The protein localises to the cytoplasm. The enzyme catalyses octanoyl-[ACP] + L-lysyl-[protein] = N(6)-octanoyl-L-lysyl-[protein] + holo-[ACP] + H(+). The protein operates within protein modification; protein lipoylation via endogenous pathway; protein N(6)-(lipoyl)lysine from octanoyl-[acyl-carrier-protein]: step 1/2. Its function is as follows. Catalyzes the transfer of endogenously produced octanoic acid from octanoyl-acyl-carrier-protein onto the lipoyl domains of lipoate-dependent enzymes. Lipoyl-ACP can also act as a substrate although octanoyl-ACP is likely to be the physiological substrate. This Buchnera aphidicola subsp. Schizaphis graminum (strain Sg) protein is Octanoyltransferase.